The primary structure comprises 415 residues: Histidine--tRNA ligase (415 aa).

It belongs to the class-II aminoacyl-tRNA synthetase family. Homodimer.

It localises to the cytoplasm. The enzyme catalyses tRNA(His) + L-histidine + ATP = L-histidyl-tRNA(His) + AMP + diphosphate + H(+). This Clostridium botulinum (strain Okra / Type B1) protein is Histidine--tRNA ligase.